Here is a 234-residue protein sequence, read N- to C-terminus: MITKTKIMMAPRKLKIARKSRFWAVNSLPGSHKKDSSIPLLIALRDYLKLGDKEREITRILTNSLVMVDGKVVKERRRGIGFMDTLTVSGNDYLVSYDRKGKLVILPKPGETKGLKLLRVKGKTYVKGGRIQISFHDGSTMVTDRKDIKNGDSVLVKIPKKEIVDVLKFAPGNRVFITGGSHVGEIATIKSIEIKSSSGENMVHMNEGFSTVSSYVFVMGSPKYTFSMPEAIAE.

The S4 RNA-binding; degenerate domain maps to 38–99 (IPLLIALRDY…GNDYLVSYDR (62 aa)).

The protein belongs to the eukaryotic ribosomal protein eS4 family.

This chain is Small ribosomal subunit protein eS4 (rps4e), found in Picrophilus torridus (strain ATCC 700027 / DSM 9790 / JCM 10055 / NBRC 100828 / KAW 2/3).